Consider the following 308-residue polypeptide: Ribonuclease HIII (308 aa).

An RNase H type-2 domain is found at 88-304 (FHCIGSDEAG…RDKAIHLINQ (217 aa)). A divalent metal cation is bound by residues D94, E95, and D199.

It belongs to the RNase HII family. RnhC subfamily. It depends on Mn(2+) as a cofactor. The cofactor is Mg(2+).

It is found in the cytoplasm. The catalysed reaction is Endonucleolytic cleavage to 5'-phosphomonoester.. Functionally, endonuclease that specifically degrades the RNA of RNA-DNA hybrids. The protein is Ribonuclease HIII of Staphylococcus epidermidis (strain ATCC 35984 / DSM 28319 / BCRC 17069 / CCUG 31568 / BM 3577 / RP62A).